The primary structure comprises 360 residues: Peptide chain release factor 1 (360 aa).

Position 237 is an N5-methylglutamine (Gln-237).

This sequence belongs to the prokaryotic/mitochondrial release factor family. Post-translationally, methylated by PrmC. Methylation increases the termination efficiency of RF1.

It is found in the cytoplasm. Peptide chain release factor 1 directs the termination of translation in response to the peptide chain termination codons UAG and UAA. The chain is Peptide chain release factor 1 from Saccharophagus degradans (strain 2-40 / ATCC 43961 / DSM 17024).